The following is a 324-amino-acid chain: DNA repair and recombination protein RadA (324 aa).

ATP is bound at residue 114–121; that stretch reads GEFGSGKT.

It belongs to the eukaryotic RecA-like protein family.

Involved in DNA repair and in homologous recombination. Binds and assemble on single-stranded DNA to form a nucleoprotein filament. Hydrolyzes ATP in a ssDNA-dependent manner and promotes DNA strand exchange between homologous DNA molecules. The protein is DNA repair and recombination protein RadA of Saccharolobus islandicus (strain Y.N.15.51 / Yellowstone #2) (Sulfolobus islandicus).